Here is a 292-residue protein sequence, read N- to C-terminus: Glycine--tRNA ligase alpha subunit (292 aa).

This sequence belongs to the class-II aminoacyl-tRNA synthetase family. Tetramer of two alpha and two beta subunits.

It is found in the cytoplasm. The catalysed reaction is tRNA(Gly) + glycine + ATP = glycyl-tRNA(Gly) + AMP + diphosphate. This Clostridioides difficile (strain 630) (Peptoclostridium difficile) protein is Glycine--tRNA ligase alpha subunit.